A 341-amino-acid polypeptide reads, in one-letter code: Phosphoribosylformylglycinamidine cyclo-ligase (341 aa).

The protein belongs to the AIR synthase family.

It localises to the cytoplasm. The catalysed reaction is 2-formamido-N(1)-(5-O-phospho-beta-D-ribosyl)acetamidine + ATP = 5-amino-1-(5-phospho-beta-D-ribosyl)imidazole + ADP + phosphate + H(+). Its pathway is purine metabolism; IMP biosynthesis via de novo pathway; 5-amino-1-(5-phospho-D-ribosyl)imidazole from N(2)-formyl-N(1)-(5-phospho-D-ribosyl)glycinamide: step 2/2. The protein is Phosphoribosylformylglycinamidine cyclo-ligase of Agathobacter rectalis (strain ATCC 33656 / DSM 3377 / JCM 17463 / KCTC 5835 / VPI 0990) (Eubacterium rectale).